A 643-amino-acid polypeptide reads, in one-letter code: Probable potassium transport system protein Kup (643 aa).

A compositionally biased stretch (basic and acidic residues) spans 1–12 (MSISSKTEDSDI). Residues 1-20 (MSISSKTEDSDIRSSVMTDH) are disordered. Helical transmembrane passes span 28–48 (LAGL…TSPL), 65–85 (AGNV…IVGL), 121–141 (WLLV…GMIT), 158–178 (PAFH…LFLF), 187–207 (GALF…LGII), 224–244 (GISF…AVFL), 268–288 (WFLL…ALLL), 301–321 (LVPS…TIIA), 358–378 (IYVP…VAWF), 384–404 (LAAA…ILFY), 415–435 (PAAL…FFGA), and 440–460 (LFHG…IMNT).

The protein belongs to the HAK/KUP transporter (TC 2.A.72) family.

The protein resides in the cell inner membrane. It carries out the reaction K(+)(in) + H(+)(in) = K(+)(out) + H(+)(out). Its function is as follows. Transport of potassium into the cell. Likely operates as a K(+):H(+) symporter. The chain is Probable potassium transport system protein Kup from Chlorobium luteolum (strain DSM 273 / BCRC 81028 / 2530) (Pelodictyon luteolum).